Reading from the N-terminus, the 372-residue chain is L-lysine 4-hydroxylase (372 aa).

Fe cation contacts are provided by H176, E178, and H312.

This sequence belongs to the clavaminate synthase family. Fe(2+) is required as a cofactor.

It catalyses the reaction L-lysine + 2-oxoglutarate + O2 = (4R)-4-hydroxy-L-lysine + succinate + CO2. Alpha-ketoglutarate-dependent dioxygenase that in vitro catalyzes the regio- and stereoselective hydroxylation of L-lysine, leading to (4R)-4-hydroxy-L-lysine. The protein is L-lysine 4-hydroxylase of Flavobacterium sp. (strain CF136).